We begin with the raw amino-acid sequence, 1108 residues long: DNA-directed RNA polymerase subunit beta (1108 aa).

The tract at residues 1081 to 1108 (SPRRTPARPTIDYSALDDTDDKEGATTF) is disordered.

This sequence belongs to the RNA polymerase beta chain family. In terms of assembly, in cyanobacteria the RNAP catalytic core is composed of 2 alpha, 1 beta, 1 beta', 1 gamma and 1 omega subunit. When a sigma factor is associated with the core the holoenzyme is formed, which can initiate transcription.

The enzyme catalyses RNA(n) + a ribonucleoside 5'-triphosphate = RNA(n+1) + diphosphate. DNA-dependent RNA polymerase catalyzes the transcription of DNA into RNA using the four ribonucleoside triphosphates as substrates. The sequence is that of DNA-directed RNA polymerase subunit beta from Thermosynechococcus vestitus (strain NIES-2133 / IAM M-273 / BP-1).